We begin with the raw amino-acid sequence, 689 residues long: Glycine--tRNA ligase beta subunit (689 aa).

It belongs to the class-II aminoacyl-tRNA synthetase family. In terms of assembly, tetramer of two alpha and two beta subunits.

It is found in the cytoplasm. It catalyses the reaction tRNA(Gly) + glycine + ATP = glycyl-tRNA(Gly) + AMP + diphosphate. In Salmonella agona (strain SL483), this protein is Glycine--tRNA ligase beta subunit.